The sequence spans 1673 residues: Protein TIC 214 (1673 aa).

The next 6 membrane-spanning stretches (helical) occupy residues 18–38, 67–87, 90–110, 127–147, 175–195, and 218–238; these read IINS…FSIG, FITG…HLAL, PHTI…CNTH, LSIQ…HFIL, VGWI…VVWI, and SMSI…YYLG.

Belongs to the TIC214 family. As to quaternary structure, part of the Tic complex.

The protein localises to the plastid. It localises to the chloroplast inner membrane. In terms of biological role, involved in protein precursor import into chloroplasts. May be part of an intermediate translocation complex acting as a protein-conducting channel at the inner envelope. The sequence is that of Protein TIC 214 from Lactuca sativa (Garden lettuce).